A 391-amino-acid polypeptide reads, in one-letter code: S-adenosylmethionine synthase (391 aa).

Residue His-19 coordinates ATP. Asp-21 is a Mg(2+) binding site. Residue Glu-47 coordinates K(+). L-methionine is bound by residues Glu-60 and Gln-103. The tract at residues 103 to 113 (QSADIAQGVDR) is flexible loop. ATP is bound by residues 168–170 (DGK), 236–237 (RF), Asp-245, 251–252 (RK), Ala-268, and Lys-272. Asp-245 is a binding site for L-methionine. Residue Lys-276 coordinates L-methionine.

This sequence belongs to the AdoMet synthase family. In terms of assembly, homotetramer; dimer of dimers. The cofactor is Mg(2+). Requires K(+) as cofactor.

It localises to the cytoplasm. It catalyses the reaction L-methionine + ATP + H2O = S-adenosyl-L-methionine + phosphate + diphosphate. Its pathway is amino-acid biosynthesis; S-adenosyl-L-methionine biosynthesis; S-adenosyl-L-methionine from L-methionine: step 1/1. In terms of biological role, catalyzes the formation of S-adenosylmethionine (AdoMet) from methionine and ATP. The overall synthetic reaction is composed of two sequential steps, AdoMet formation and the subsequent tripolyphosphate hydrolysis which occurs prior to release of AdoMet from the enzyme. This is S-adenosylmethionine synthase from Nitratidesulfovibrio vulgaris (strain ATCC 29579 / DSM 644 / CCUG 34227 / NCIMB 8303 / VKM B-1760 / Hildenborough) (Desulfovibrio vulgaris).